The sequence spans 355 residues: Uroporphyrinogen decarboxylase (355 aa).

Substrate-binding positions include 36–40, Asp85, Tyr160, Ser215, and His334; that span reads RQAGR.

Belongs to the uroporphyrinogen decarboxylase family. Homodimer.

Its subcellular location is the cytoplasm. It carries out the reaction uroporphyrinogen III + 4 H(+) = coproporphyrinogen III + 4 CO2. It participates in porphyrin-containing compound metabolism; protoporphyrin-IX biosynthesis; coproporphyrinogen-III from 5-aminolevulinate: step 4/4. Its function is as follows. Catalyzes the decarboxylation of four acetate groups of uroporphyrinogen-III to yield coproporphyrinogen-III. This chain is Uroporphyrinogen decarboxylase, found in Rhodococcus opacus (strain B4).